Here is an 880-residue protein sequence, read N- to C-terminus: Valine--tRNA ligase (880 aa).

The short motif at 49–59 is the 'HIGH' region element; sequence PNVTGRLHLGH. The 'KMSKS' region signature appears at 525–529; it reads KMSKS. Lysine 528 serves as a coordination point for ATP. Residues 809–879 adopt a coiled-coil conformation; that stretch reads LEGLINIDEE…AVQKRMAELK (71 aa).

The protein belongs to the class-I aminoacyl-tRNA synthetase family. ValS type 1 subfamily. As to quaternary structure, monomer.

The protein resides in the cytoplasm. It carries out the reaction tRNA(Val) + L-valine + ATP = L-valyl-tRNA(Val) + AMP + diphosphate. Functionally, as ValRS can inadvertently accommodate and process structurally similar amino acids such as threonine, to avoid such errors, it has a 'posttransfer' editing activity that hydrolyzes mischarged Thr-tRNA(Val) in a tRNA-dependent manner. Catalyzes the attachment of valine to tRNA(Val). The chain is Valine--tRNA ligase from Bacillus subtilis (strain 168).